The following is a 792-amino-acid chain: Kinesin-associated protein 3 (792 aa).

Phosphoserine is present on S60. Basic and acidic residues predominate over residues 103-119; it reads LSGKEKKEKSSKPKDPP. The disordered stretch occupies residues 103 to 124; that stretch reads LSGKEKKEKSSKPKDPPPFEGM. 5 ARM repeats span residues 333-373, 374-412, 494-533, 578-620, and 621-662; these read FMEN…NLSF, DTGLRNKMVQVGLLPKLTALLGNDNYKQIAMCVLYHISM, DGPTKNLFIDYVGDLAAQISNDEEEEFVIECLGTLANLTI, DDSC…QMVF, and HQAT…IIAE.

As to quaternary structure, heterotrimer of KIFAP3, KIF3A and KIF3B. Interacts with RAP1GDS1/SMG GDS. Interacts with SMC3 subunit of the cohesin complex. Phosphorylated on tyrosine residues by SRC in vitro; this reduces the binding affinity of the protein for RAP1GDS1.

Involved in tethering the chromosomes to the spindle pole and in chromosome movement. Binds to the tail domain of the KIF3A/KIF3B heterodimer to form a heterotrimeric KIF3 complex and may regulate the membrane binding of this complex. The protein is Kinesin-associated protein 3 (KIFAP3) of Homo sapiens (Human).